The primary structure comprises 59 residues: Conotoxin mr5a (59 aa).

Residues 1 to 22 (MRCLPVFVILLLLIASAPSVDA) form the signal peptide. The propeptide occupies 23–48 (RPKTKDDMPLASFHDNAKRILQILQD).

Post-translationally, contains 2 disulfide bonds that can be either 'C1-C3, C2-C4' or 'C1-C4, C2-C3', since these disulfide connectivities have been observed for conotoxins with cysteine framework V (for examples, see AC P0DQQ7 and AC P81755). In terms of tissue distribution, expressed by the venom duct.

It localises to the secreted. The protein is Conotoxin mr5a of Conus marmoreus (Marble cone).